Here is a 379-residue protein sequence, read N- to C-terminus: Glutamate 5-kinase (379 aa).

Position 19 (lysine 19) interacts with ATP. Substrate is bound by residues serine 59, aspartate 146, and asparagine 158. Residues 178 to 179 (TD) and 220 to 226 (TGGMATK) contribute to the ATP site. The 79-residue stretch at 285–363 (SGDIIIDDGA…KDIISILGHD (79 aa)) folds into the PUA domain.

The protein belongs to the glutamate 5-kinase family.

It localises to the cytoplasm. The catalysed reaction is L-glutamate + ATP = L-glutamyl 5-phosphate + ADP. The protein operates within amino-acid biosynthesis; L-proline biosynthesis; L-glutamate 5-semialdehyde from L-glutamate: step 1/2. Functionally, catalyzes the transfer of a phosphate group to glutamate to form L-glutamate 5-phosphate. This chain is Glutamate 5-kinase, found in Vibrio campbellii (strain ATCC BAA-1116).